We begin with the raw amino-acid sequence, 207 residues long: Small ribosomal subunit protein uS4A (207 aa).

The S4 RNA-binding domain occupies Arg98–Ala161.

It belongs to the universal ribosomal protein uS4 family. In terms of assembly, part of the 30S ribosomal subunit. Contacts protein S5. The interaction surface between S4 and S5 is involved in control of translational fidelity.

Its function is as follows. One of the primary rRNA binding proteins, it binds directly to 16S rRNA where it nucleates assembly of the body of the 30S subunit. With S5 and S12 plays an important role in translational accuracy. The polypeptide is Small ribosomal subunit protein uS4A (Symbiobacterium thermophilum (strain DSM 24528 / JCM 14929 / IAM 14863 / T)).